The primary structure comprises 179 residues: Large ribosomal subunit protein uL6 (179 aa).

This sequence belongs to the universal ribosomal protein uL6 family. In terms of assembly, part of the 50S ribosomal subunit.

This protein binds to the 23S rRNA, and is important in its secondary structure. It is located near the subunit interface in the base of the L7/L12 stalk, and near the tRNA binding site of the peptidyltransferase center. The polypeptide is Large ribosomal subunit protein uL6 (Bacillus velezensis (strain DSM 23117 / BGSC 10A6 / LMG 26770 / FZB42) (Bacillus amyloliquefaciens subsp. plantarum)).